The following is a 295-amino-acid chain: Pantothenate synthetase (295 aa).

Histidine 37 (proton donor) is an active-site residue. Residue glutamine 61 coordinates (R)-pantoate. Glutamine 61 serves as a coordination point for beta-alanine. Residue 154–157 (GRKD) participates in ATP binding. Glutamine 160 provides a ligand contact to (R)-pantoate. ATP-binding positions include valine 183 and 191-194 (QSSR).

Belongs to the pantothenate synthetase family. As to quaternary structure, homodimer.

Its subcellular location is the cytoplasm. It carries out the reaction (R)-pantoate + beta-alanine + ATP = (R)-pantothenate + AMP + diphosphate + H(+). The protein operates within cofactor biosynthesis; (R)-pantothenate biosynthesis; (R)-pantothenate from (R)-pantoate and beta-alanine: step 1/1. Its function is as follows. Catalyzes the condensation of pantoate with beta-alanine in an ATP-dependent reaction via a pantoyl-adenylate intermediate. The sequence is that of Pantothenate synthetase from Salinibacter ruber (strain DSM 13855 / M31).